The following is a 402-amino-acid chain: Choline dehydrogenase (402 aa).

It belongs to the iron-containing alcohol dehydrogenase family.

The catalysed reaction is choline + NAD(+) = betaine aldehyde + NADH + H(+). The protein operates within amine and polyamine biosynthesis; betaine biosynthesis via choline pathway; betaine aldehyde from choline (dehydrogenase route): step 1/1. Functionally, involved in the biosynthesis of the osmoprotectant glycine betaine from choline. The polypeptide is Choline dehydrogenase (Bacillus subtilis (strain 168)).